Reading from the N-terminus, the 780-residue chain is ATP-dependent 6-phosphofructokinase, liver type (780 aa).

Ala-2 carries the post-translational modification N-acetylalanine. Residues 2–390 (AAVDLEKLRA…NWNIYKLLAH (389 aa)) form an N-terminal catalytic PFK domain 1 region. ATP is bound by residues Gly-25, 88–89 (RC), and 118–121 (GDGS). Residue Asp-119 participates in Mg(2+) binding. Residues 164 to 166 (SID), Arg-201, 208 to 210 (MGR), Glu-264, Arg-292, and 298 to 301 (HVQR) contribute to the substrate site. The active-site Proton acceptor is the Asp-166. Ser-377 carries the post-translational modification Phosphoserine. The segment at 391 to 400 (QKPPKEKSNF) is interdomain linker. The tract at residues 401 to 780 (SLAILNVGAP…RRTLSMDKGF (380 aa)) is C-terminal regulatory PFK domain 2. Beta-D-fructose 2,6-bisphosphate-binding positions include Arg-470, 527-531 (TISNN), Arg-565, 572-574 (MGG), and Glu-628. Ser-529 carries O-linked (GlcNAc) serine glycosylation. Tyr-640 carries the post-translational modification Phosphotyrosine. Residues Arg-654, 660-663 (HLQQ), and Arg-734 contribute to the beta-D-fructose 2,6-bisphosphate site. Ser-775 bears the Phosphoserine mark.

It belongs to the phosphofructokinase type A (PFKA) family. ATP-dependent PFK group I subfamily. Eukaryotic two domain clade 'E' sub-subfamily. Homo- and heterotetramers. Phosphofructokinase (PFK) enzyme functions as a tetramer composed of different combinations of 3 types of subunits, called PFKM (M), PFKL (L) and PFKP (P). The composition of the PFK tetramer differs according to the tissue type it is present in. The kinetic and regulatory properties of the tetrameric enzyme are dependent on the subunit composition, hence can vary across tissues. Mg(2+) is required as a cofactor. Post-translationally, glcNAcylation at Ser-529 by OGT decreases enzyme activity, leading to redirect glucose flux through the oxidative pentose phosphate pathway. Glycosylation is stimulated by both hypoxia and glucose deprivation.

The protein localises to the cytoplasm. It carries out the reaction beta-D-fructose 6-phosphate + ATP = beta-D-fructose 1,6-bisphosphate + ADP + H(+). Its pathway is carbohydrate degradation; glycolysis; D-glyceraldehyde 3-phosphate and glycerone phosphate from D-glucose: step 3/4. Its activity is regulated as follows. Allosterically activated by ADP, AMP, or fructose 2,6-bisphosphate, and allosterically inhibited by ATP or citrate. GlcNAcylation by OGT overcomes allosteric regulation. In terms of biological role, catalyzes the phosphorylation of D-fructose 6-phosphate to fructose 1,6-bisphosphate by ATP, the first committing step of glycolysis. Negatively regulates the phagocyte oxidative burst in response to bacterial infection by controlling cellular NADPH biosynthesis and NADPH oxidase-derived reactive oxygen species. Upon macrophage activation, drives the metabolic switch toward glycolysis, thus preventing glucose turnover that produces NADPH via pentose phosphate pathway. The sequence is that of ATP-dependent 6-phosphofructokinase, liver type (PFKL) from Pongo abelii (Sumatran orangutan).